A 349-amino-acid chain; its full sequence is DNA-directed RNA polymerase subunit Rpo1N (349 aa).

Residues 306 to 349 form a disordered region; that stretch reads EDEGEEFAGEQATNLSESADDRMDRDRPSSHGAAPIDVPEVGDD. Basic and acidic residues predominate over residues 324–334; the sequence is ADDRMDRDRPS.

Belongs to the RNA polymerase beta' chain family. As to quaternary structure, part of the RNA polymerase complex.

It is found in the cytoplasm. The enzyme catalyses RNA(n) + a ribonucleoside 5'-triphosphate = RNA(n+1) + diphosphate. In terms of biological role, DNA-dependent RNA polymerase (RNAP) catalyzes the transcription of DNA into RNA using the four ribonucleoside triphosphates as substrates. Forms the clamp head domain. This Halococcus morrhuae (Micrococcus morrhuae) protein is DNA-directed RNA polymerase subunit Rpo1N.